A 188-amino-acid chain; its full sequence is Peptide deformylase (188 aa).

Positions 109 and 152 each coordinate Fe cation. The active site involves glutamate 153. Histidine 156 contacts Fe cation.

The protein belongs to the polypeptide deformylase family. It depends on Fe(2+) as a cofactor.

It catalyses the reaction N-terminal N-formyl-L-methionyl-[peptide] + H2O = N-terminal L-methionyl-[peptide] + formate. In terms of biological role, removes the formyl group from the N-terminal Met of newly synthesized proteins. Requires at least a dipeptide for an efficient rate of reaction. N-terminal L-methionine is a prerequisite for activity but the enzyme has broad specificity at other positions. In Chloroflexus aurantiacus (strain ATCC 29366 / DSM 635 / J-10-fl), this protein is Peptide deformylase.